Consider the following 480-residue polypeptide: uncharacterized protein (480 aa).

This is an uncharacterized protein from Xylella fastidiosa (strain 9a5c).